We begin with the raw amino-acid sequence, 1149 residues long: ATP-dependent helicase/deoxyribonuclease subunit B (1149 aa).

G8 to T15 is a binding site for ATP. Positions 784, 1102, 1105, and 1111 each coordinate [4Fe-4S] cluster.

This sequence belongs to the helicase family. AddB/RexB type 1 subfamily. As to quaternary structure, heterodimer of AddA and AddB. Mg(2+) serves as cofactor. [4Fe-4S] cluster is required as a cofactor.

Functionally, the heterodimer acts as both an ATP-dependent DNA helicase and an ATP-dependent, dual-direction single-stranded exonuclease. Recognizes the chi site generating a DNA molecule suitable for the initiation of homologous recombination. The AddB subunit has 5' -&gt; 3' nuclease activity but not helicase activity. This chain is ATP-dependent helicase/deoxyribonuclease subunit B, found in Thermoanaerobacter pseudethanolicus (strain ATCC 33223 / 39E) (Clostridium thermohydrosulfuricum).